The sequence spans 587 residues: Aspartate--tRNA ligase (587 aa).

An L-aspartate-binding site is contributed by E174. An aspartate region spans residues 198 to 201 (QITK). Position 220 (R220) interacts with L-aspartate. Residues 220–222 (RDE) and Q229 each bind ATP. An L-aspartate-binding site is contributed by H443. E477 is an ATP binding site. R484 contributes to the L-aspartate binding site. Residue 529–532 (GLDR) coordinates ATP.

It belongs to the class-II aminoacyl-tRNA synthetase family. Type 1 subfamily. In terms of assembly, homodimer.

The protein localises to the cytoplasm. It catalyses the reaction tRNA(Asp) + L-aspartate + ATP = L-aspartyl-tRNA(Asp) + AMP + diphosphate. Its function is as follows. Catalyzes the attachment of L-aspartate to tRNA(Asp) in a two-step reaction: L-aspartate is first activated by ATP to form Asp-AMP and then transferred to the acceptor end of tRNA(Asp). This Streptococcus pneumoniae serotype 4 (strain ATCC BAA-334 / TIGR4) protein is Aspartate--tRNA ligase.